The sequence spans 302 residues: Phosphoribosylaminoimidazole-succinocarboxamide synthase (302 aa).

The protein belongs to the SAICAR synthetase family.

It catalyses the reaction 5-amino-1-(5-phospho-D-ribosyl)imidazole-4-carboxylate + L-aspartate + ATP = (2S)-2-[5-amino-1-(5-phospho-beta-D-ribosyl)imidazole-4-carboxamido]succinate + ADP + phosphate + 2 H(+). The protein operates within purine metabolism; IMP biosynthesis via de novo pathway; 5-amino-1-(5-phospho-D-ribosyl)imidazole-4-carboxamide from 5-amino-1-(5-phospho-D-ribosyl)imidazole-4-carboxylate: step 1/2. The sequence is that of Phosphoribosylaminoimidazole-succinocarboxamide synthase from Cupriavidus metallidurans (strain ATCC 43123 / DSM 2839 / NBRC 102507 / CH34) (Ralstonia metallidurans).